The sequence spans 481 residues: Glutamate mutase epsilon subunit (481 aa).

Residue Arg-67 coordinates L-glutamate. An adenosylcob(III)alamin-binding site is contributed by Gly-69. Arg-99 lines the L-glutamate pocket. Asn-122 contributes to the adenosylcob(III)alamin binding site. L-glutamate-binding positions include 148–149 (RH), Glu-170, and Tyr-176. Pro-179 contacts adenosylcob(III)alamin. An L-glutamate-binding site is contributed by Tyr-180. Residues Phe-296, Lys-325, Glu-329, and Ile-333 each coordinate adenosylcob(III)alamin.

It belongs to the methylaspartate mutase GlmE subunit family. In terms of assembly, heterotetramer composed of 2 epsilon subunits (GlmE) and 2 sigma subunits (GlmS). GlmE exists as a homodimer and GlmS as a monomer. Requires adenosylcob(III)alamin as cofactor.

It catalyses the reaction (2S,3S)-3-methyl-L-aspartate = L-glutamate. It functions in the pathway amino-acid degradation; L-glutamate degradation via mesaconate pathway; acetate and pyruvate from L-glutamate: step 1/4. Catalyzes the carbon skeleton rearrangement of L-glutamate to L-threo-3-methylaspartate ((2S,3S)-3-methylaspartate). In Escherichia coli O157:H7, this protein is Glutamate mutase epsilon subunit.